The following is a 95-amino-acid chain: Co-chaperonin GroES (95 aa).

The protein belongs to the GroES chaperonin family. In terms of assembly, heptamer of 7 subunits arranged in a ring. Interacts with the chaperonin GroEL.

Its subcellular location is the cytoplasm. Functionally, together with the chaperonin GroEL, plays an essential role in assisting protein folding. The GroEL-GroES system forms a nano-cage that allows encapsulation of the non-native substrate proteins and provides a physical environment optimized to promote and accelerate protein folding. GroES binds to the apical surface of the GroEL ring, thereby capping the opening of the GroEL channel. In Rickettsia prowazekii (strain Madrid E), this protein is Co-chaperonin GroES.